A 235-amino-acid chain; its full sequence is Transmembrane emp24 domain-containing protein 9 (235 aa).

Residues 1–37 (MAAERSLWVVGLCPGSRLGRVVRVLLLLLWFAARGGA) form the signal peptide. Residues 38-201 (LYFHIGETEK…FRQTSESTNQ (164 aa)) are Lumenal-facing. A GOLD domain is found at 47–145 (KKCFIEEIPD…MLRVHLDIQV (99 aa)). A required for interaction with STX17 region spans residues 121 to 160 (CLHSNSTKFSLFAGGMLRVHLDIQVGEHANDYAEIAAKDK). N-linked (GlcNAc...) asparagine glycosylation is present at asparagine 125. The stretch at 154–184 (EIAAKDKLSELQLRVRQLVEQVEQIQKEQNY) forms a coiled coil. Lysine 160 carries the N6-acetyllysine modification. A helical transmembrane segment spans residues 202–222 (RVLWWSILQTLILVAIGVWQM). The Cytoplasmic segment spans residues 223–235 (RHLKSFFEAKKLV). Positions 228 to 229 (FF) match the COPII vesicle coat-binding motif. The short motif at 228–235 (FFEAKKLV) is the COPI vesicle coat-binding element.

This sequence belongs to the EMP24/GP25L family. Monomer and homodimer in endoplasmic reticulum. Predominantly monomeric and to lesser extent homodimeric in endoplasmic reticulum-Golgi intermediate compartment and cis-Golgi network. Probably oligomerizes with other members of the EMP24/GP25L family such as TMED2, TMED7 and TMED10. Interacts with TMED5. Interacts (via C-terminus) with COPG1; the interaction involves dimeric TMED9. Interacts with PTPN2 and SPAST. Interacts with STX17; the interaction is direct. Post-translationally, N-linked glycosylated containing high mannose.

It is found in the endoplasmic reticulum membrane. The protein localises to the golgi apparatus. Its subcellular location is the cis-Golgi network membrane. The protein resides in the endoplasmic reticulum-Golgi intermediate compartment membrane. It localises to the trans-Golgi network membrane. In terms of biological role, appears to be involved in vesicular protein trafficking, mainly in the early secretory pathway. In COPI vesicle-mediated retrograde transport involved in the coatomer recruitment to membranes of the early secretory pathway. Increases coatomer-dependent activity of ARFGAP2. Thought to play a crucial role in the specific retention of p24 complexes in cis-Golgi membranes; specifically contributes to the coupled localization of TMED2 and TMED10 in the cis-Golgi network. May be involved in organization of intracellular membranes, such as of the ER-Golgi intermediate compartment and the Golgi apparatus. Involved in ER localization of PTPN2. The protein is Transmembrane emp24 domain-containing protein 9 (TMED9) of Bos taurus (Bovine).